The primary structure comprises 440 residues: Nuclear fusion protein BIK1 (440 aa).

The CAP-Gly domain occupies 26 to 69 (GPVDTKAGMFAGVDLLANIGKNDGSFMGKKYFQTEYPQSGLFIQ). Residues Ser95 and Ser110 each carry the phosphoserine modification. Residues 108–157 (QFSPMDDPKSPTPMRSFRITSRHSGNQQSMDQEASDHHQQQEFGYDNRED) are disordered. The span at 125–139 (RITSRHSGNQQSMDQ) shows a compositional bias: polar residues. The span at 141-157 (ASDHHQQQEFGYDNRED) shows a compositional bias: basic and acidic residues. Residues 190–397 (NSSEVTIELR…AQAQTAVESL (208 aa)) are a coiled coil. The CCHC-box signature appears at 416 to 429 (CEHCDTMGHNTAEC).

Its subcellular location is the cytoplasm. It is found in the cytoskeleton. It localises to the microtubule organizing center. The protein resides in the spindle pole body. The protein localises to the spindle. In terms of biological role, required for nuclear fusion, chromosome disjunction, and nuclear segregation during mitosis. Probably required for the formation or stabilization of microtubules during mitosis and for spindle pole body fusion during conjugation. This Saccharomyces cerevisiae (strain ATCC 204508 / S288c) (Baker's yeast) protein is Nuclear fusion protein BIK1 (BIK1).